The chain runs to 500 residues: Vitamin D(3) 25-hydroxylase (500 aa).

Residue C446 coordinates heme.

Belongs to the cytochrome P450 family. Heme is required as a cofactor. In terms of tissue distribution, found in liver and kidney.

It is found in the endoplasmic reticulum membrane. Its subcellular location is the microsome membrane. It catalyses the reaction calciol + reduced [NADPH--hemoprotein reductase] + O2 = calcidiol + oxidized [NADPH--hemoprotein reductase] + H2O + H(+). The catalysed reaction is alfacalcidol + reduced [NADPH--hemoprotein reductase] + O2 = calcitriol + oxidized [NADPH--hemoprotein reductase] + H2O + H(+). The enzyme catalyses dodecanoate + reduced [NADPH--hemoprotein reductase] + O2 = 12-hydroxydodecanoate + oxidized [NADPH--hemoprotein reductase] + H2O + H(+). It carries out the reaction dodecanoate + reduced [NADPH--hemoprotein reductase] + O2 = 11-hydroxydodecanoate + oxidized [NADPH--hemoprotein reductase] + H2O + H(+). It catalyses the reaction 5beta-cholestane-3alpha,7alpha-diol + reduced [NADPH--hemoprotein reductase] + O2 = 5beta-cholestane-3alpha,7alpha,25-triol + oxidized [NADPH--hemoprotein reductase] + H2O + H(+). The catalysed reaction is 5beta-cholestane-3alpha,7alpha,12alpha-triol + reduced [NADPH--hemoprotein reductase] + O2 = 5beta-cholestane-3alpha,7alpha,12alpha,25-tetrol + oxidized [NADPH--hemoprotein reductase] + H2O + H(+). Its function is as follows. Catalyzes the 25-hydroxylation of vitamin D(3) (calciol), 1alpha-hydroxyvitamin D(3) (alphacalcidiol) and some C27 steroids. In addition the enzyme catalyzes the hydroxylation of positions 11 and 12 of dodecanoate. The chain is Vitamin D(3) 25-hydroxylase (CYP2D25) from Sus scrofa (Pig).